Consider the following 340-residue polypeptide: Phosphoribosylformylglycinamidine cyclo-ligase (340 aa).

It belongs to the AIR synthase family.

It localises to the cytoplasm. It carries out the reaction 2-formamido-N(1)-(5-O-phospho-beta-D-ribosyl)acetamidine + ATP = 5-amino-1-(5-phospho-beta-D-ribosyl)imidazole + ADP + phosphate + H(+). It functions in the pathway purine metabolism; IMP biosynthesis via de novo pathway; 5-amino-1-(5-phospho-D-ribosyl)imidazole from N(2)-formyl-N(1)-(5-phospho-D-ribosyl)glycinamide: step 2/2. The sequence is that of Phosphoribosylformylglycinamidine cyclo-ligase from Streptococcus pyogenes serotype M3 (strain ATCC BAA-595 / MGAS315).